We begin with the raw amino-acid sequence, 223 residues long: Small ribosomal subunit protein uS3 (223 aa).

Residues 39–108 (IRNFVKKNSY…NILINIVEVK (70 aa)) form the KH type-2 domain.

This sequence belongs to the universal ribosomal protein uS3 family. As to quaternary structure, part of the 30S ribosomal subunit. Forms a tight complex with proteins S10 and S14.

Functionally, binds the lower part of the 30S subunit head. Binds mRNA in the 70S ribosome, positioning it for translation. The protein is Small ribosomal subunit protein uS3 of Clostridium botulinum (strain Okra / Type B1).